A 296-amino-acid chain; its full sequence is UPF0761 membrane protein YE0031 (296 aa).

7 helical membrane passes run 44-64, 67-87, 108-128, 136-156, 185-205, 212-232, and 246-266; these read LLSL…FPMF, ISIK…GDII, GLIV…NIIW, LVFS…LVGA, LFPL…VPTV, ALIG…GFTM, and VLAV…IVLL.

The protein belongs to the UPF0761 family.

The protein resides in the cell inner membrane. This is UPF0761 membrane protein YE0031 from Yersinia enterocolitica serotype O:8 / biotype 1B (strain NCTC 13174 / 8081).